Reading from the N-terminus, the 1297-residue chain is MRILRGSPALSEFRVNKLLTACREQQLPVTGIYAEFMHFADLKAELNPQELEKLEKLLTYGPTIQEHEPQGLLLLVTPRPGTISPWSSKATDIAHNCGLHGIKRLERGTAYYVEAETALTAAQIATLEALLHDRMMEVVFAELTDAQQLFSVAEPAPMSQVDVLAGGRRALEEANVSLGLALAEDEIDYLVESFTKLGRNPNDIELMMFAQANSEHCRHKIFNADWTIDGVKQDKSLFKMIKNTFEQTPDYVLSAYKDNAAVMTGSTVGRFFPDPESRQYTYHHEDAHILMKVETHNHPTAISPWPGASTGSGGEIRDEGATGIGGKPKAGLVGFTTSNLRIPGFEQPWESDFGKPSRIVNALDIMLEGPLGGAAFNNEFGRPNLLGYFRTYEEKVTSHAGEEVRGYHKPIMIAGGMGNIRAEHIQKKEIPVGAKLIVLGGPAMNIGLGGGAASSMASGQSAEDLDFASVQRENPEMERRCQEVIDRCWQLGDKNPIAFIHDVGAGGISNALPELVNDGDRGGKFQLRNVPNDEPGMSPLEIWCNESQERYVLAVAAEDMPLFDAICQRERAPYAVVGEATEERHLTLEDSHFANTPIDMPMDILLGKPPKMHREASTLKVSSPALERSGIELNEAVDRVLRLPAVAEKTFLITIGDRSVTGLVARDQMVGPWQVPVANCAVTAASFDSYHGEAMSMGERTPVALLDFGASARLAVGEAITNIAATDIGELKRIKLSANWMSPAGHPGEDAGLYEAVKAVGEELCPALGITIPVGKDSMSMKTKWQENGEQKEVTSPLSLIITAFARVEDIRKTVTPQLRTDLGETSLILIDLGNGQNRLGATALAQVYKQLGDKPADVDNAAQLKGFFDAVQTLVRNDKLVAYHDKGDGGLLVTLAEMAFAGHCGIKANIETLGDDALAALFNEELGAVVQVKNDELNAVLATLAAHGLEACAHVIGEVEASDRLLITCGEEVLIERSRTELRTIWAEMTHKMQALRDNSACADQEFAAKQDNRDPGLNAKLTYDVQADVAAPYIAKGVRPKMAILREQGVNSHVEMAAAFDRAGFDAVDVHMSDILTGQTVLDAYQGLVACGGFSYGDVLGAGEGWAKSILFNAQAREQFEQFFQRKDTFSLGVCNGCQMLSNLRDLIPGAELWPRFVRNESDRFEARFSLVEVQKSPSLFFSEMAGSRMPIAVSHGEGRVEVRDAQHLAAIEQSGTVAIRFVDNFGQPTQAYPSNPNGSPNAITGLTTQDGRVTIMMPHPERVFRTVANSWHPDNWGENGAWMRMFQNARKYFG.

ATP contacts are provided by residues 307-318 (GASTGSGGEIRD) and Ala678. 3 residues coordinate Mg(2+): Glu718, Asn722, and Asp886. The Glutamine amidotransferase type-1 domain occupies 1044 to 1297 (MAILREQGVN…MFQNARKYFG (254 aa)). The Nucleophile role is filled by Cys1137. Active-site residues include His1262 and Glu1264.

In the N-terminal section; belongs to the FGAMS family. In terms of assembly, monomer.

The protein resides in the cytoplasm. The enzyme catalyses N(2)-formyl-N(1)-(5-phospho-beta-D-ribosyl)glycinamide + L-glutamine + ATP + H2O = 2-formamido-N(1)-(5-O-phospho-beta-D-ribosyl)acetamidine + L-glutamate + ADP + phosphate + H(+). Its pathway is purine metabolism; IMP biosynthesis via de novo pathway; 5-amino-1-(5-phospho-D-ribosyl)imidazole from N(2)-formyl-N(1)-(5-phospho-D-ribosyl)glycinamide: step 1/2. In terms of biological role, phosphoribosylformylglycinamidine synthase involved in the purines biosynthetic pathway. Catalyzes the ATP-dependent conversion of formylglycinamide ribonucleotide (FGAR) and glutamine to yield formylglycinamidine ribonucleotide (FGAM) and glutamate. The protein is Phosphoribosylformylglycinamidine synthase of Vibrio cholerae serotype O1 (strain ATCC 39315 / El Tor Inaba N16961).